The following is a 732-amino-acid chain: Catalase-peroxidase (732 aa).

Residues 1–26 (MADNKKSPETGGITMQIPGKGRTNRD) form a disordered region. Positions 96–219 (WHSAGTYRTF…LAAVQMGLIY (124 aa)) form a cross-link, tryptophyl-tyrosyl-methioninium (Trp-Tyr) (with M-245). The Proton acceptor role is filled by His-97. A cross-link (tryptophyl-tyrosyl-methioninium (Tyr-Met) (with W-96)) is located at residues 219 to 245 (YVNPEGPDGNPDPVAAARDIREVFARM). His-260 is a binding site for heme b. Residues 344–365 (KPKGEAGAGTVPDPHDPKKRHA) form a disordered region.

The protein belongs to the peroxidase family. Peroxidase/catalase subfamily. Homodimer or homotetramer. It depends on heme b as a cofactor. In terms of processing, formation of the three residue Trp-Tyr-Met cross-link is important for the catalase, but not the peroxidase activity of the enzyme.

It carries out the reaction H2O2 + AH2 = A + 2 H2O. The catalysed reaction is 2 H2O2 = O2 + 2 H2O. Its function is as follows. Bifunctional enzyme with both catalase and broad-spectrum peroxidase activity. In Methanospirillum hungatei JF-1 (strain ATCC 27890 / DSM 864 / NBRC 100397 / JF-1), this protein is Catalase-peroxidase.